Here is a 193-residue protein sequence, read N- to C-terminus: Flagellar transcriptional regulator FlhC (193 aa).

Zn(2+)-binding residues include Cys138, Cys141, Cys158, and Cys161.

This sequence belongs to the FlhC family. In terms of assembly, heterohexamer composed of two FlhC and four FlhD subunits. Each FlhC binds a FlhD dimer, forming a heterotrimer, and a hexamer assembles by dimerization of two heterotrimers. Zn(2+) serves as cofactor.

The protein localises to the cytoplasm. In terms of biological role, functions in complex with FlhD as a master transcriptional regulator that regulates transcription of several flagellar and non-flagellar operons by binding to their promoter region. Activates expression of class 2 flagellar genes, including fliA, which is a flagellum-specific sigma factor that turns on the class 3 genes. Also regulates genes whose products function in a variety of physiological pathways. The sequence is that of Flagellar transcriptional regulator FlhC from Yersinia enterocolitica.